Here is a 339-residue protein sequence, read N- to C-terminus: Centromere protein N (339 aa).

Residues Ser226 and Ser235 each carry the phosphoserine modification.

The protein belongs to the CENP-N/CHL4 family. In terms of assembly, component of the CENPA-NAC complex, at least composed of CENPA, CENPC, CENPH, CENPM, CENPN, CENPT and CENPU. The CENPA-NAC complex interacts with the CENPA-CAD complex, composed of CENPI, CENPK, CENPL, CENPO, CENPP, CENPQ, CENPR and CENPS. Interacts directly with CENPA. Identified in a centromere complex containing histones H2A, H2B and H4, and at least CENPA, CENPB, CENPC, CENPT, CENPN, HJURP, SUPT16H, SSRP1 and RSF1.

Its subcellular location is the nucleus. The protein resides in the chromosome. It localises to the centromere. The protein localises to the kinetochore. Functionally, component of the CENPA-NAC (nucleosome-associated) complex, a complex that plays a central role in assembly of kinetochore proteins, mitotic progression and chromosome segregation. The CENPA-NAC complex recruits the CENPA-CAD (nucleosome distal) complex and may be involved in incorporation of newly synthesized CENPA into centromeres. CENPN is the first protein to bind specifically to CENPA nucleosomes and the direct binding of CENPA nucleosomes by CENPN is required for centromere assembly. Required for chromosome congression and efficiently align the chromosomes on a metaphase plate. The protein is Centromere protein N (CENPN) of Bos taurus (Bovine).